The following is a 316-amino-acid chain: Lipoyl synthase (316 aa).

The [4Fe-4S] cluster site is built by cysteine 60, cysteine 65, cysteine 71, cysteine 86, cysteine 90, cysteine 93, and serine 297. The region spanning 72–286 (WEDREATFLI…KDEADEVGFT (215 aa)) is the Radical SAM core domain.

This sequence belongs to the radical SAM superfamily. Lipoyl synthase family. Requires [4Fe-4S] cluster as cofactor.

It is found in the cytoplasm. The enzyme catalyses [[Fe-S] cluster scaffold protein carrying a second [4Fe-4S](2+) cluster] + N(6)-octanoyl-L-lysyl-[protein] + 2 oxidized [2Fe-2S]-[ferredoxin] + 2 S-adenosyl-L-methionine + 4 H(+) = [[Fe-S] cluster scaffold protein] + N(6)-[(R)-dihydrolipoyl]-L-lysyl-[protein] + 4 Fe(3+) + 2 hydrogen sulfide + 2 5'-deoxyadenosine + 2 L-methionine + 2 reduced [2Fe-2S]-[ferredoxin]. It functions in the pathway protein modification; protein lipoylation via endogenous pathway; protein N(6)-(lipoyl)lysine from octanoyl-[acyl-carrier-protein]: step 2/2. In terms of biological role, catalyzes the radical-mediated insertion of two sulfur atoms into the C-6 and C-8 positions of the octanoyl moiety bound to the lipoyl domains of lipoate-dependent enzymes, thereby converting the octanoylated domains into lipoylated derivatives. The polypeptide is Lipoyl synthase (Nocardioides sp. (strain ATCC BAA-499 / JS614)).